The chain runs to 200 residues: Cell division protein SepF (200 aa).

2 disordered regions span residues 35–60 (NLYQ…RWRE) and 170–200 (LHEV…RMAQ). Over residues 183-200 (PTGSPNQTWGNETNRMAQ) the composition is skewed to polar residues.

This sequence belongs to the SepF family. As to quaternary structure, homodimer. Interacts with FtsZ.

It is found in the cytoplasm. Its function is as follows. Cell division protein that is part of the divisome complex and is recruited early to the Z-ring. Probably stimulates Z-ring formation, perhaps through the cross-linking of FtsZ protofilaments. Its function overlaps with FtsA. In Nostoc punctiforme (strain ATCC 29133 / PCC 73102), this protein is Cell division protein SepF.